A 356-amino-acid chain; its full sequence is Histidinol-phosphate aminotransferase (356 aa).

Lysine 214 is modified (N6-(pyridoxal phosphate)lysine).

This sequence belongs to the class-II pyridoxal-phosphate-dependent aminotransferase family. Histidinol-phosphate aminotransferase subfamily. As to quaternary structure, homodimer. The cofactor is pyridoxal 5'-phosphate.

The enzyme catalyses L-histidinol phosphate + 2-oxoglutarate = 3-(imidazol-4-yl)-2-oxopropyl phosphate + L-glutamate. Its pathway is amino-acid biosynthesis; L-histidine biosynthesis; L-histidine from 5-phospho-alpha-D-ribose 1-diphosphate: step 7/9. This Escherichia fergusonii (strain ATCC 35469 / DSM 13698 / CCUG 18766 / IAM 14443 / JCM 21226 / LMG 7866 / NBRC 102419 / NCTC 12128 / CDC 0568-73) protein is Histidinol-phosphate aminotransferase.